The sequence spans 289 residues: D-alanine aminotransferase (289 aa).

Residue tyrosine 31 coordinates substrate. Pyridoxal 5'-phosphate is bound at residue arginine 50. Substrate-binding residues include arginine 99 and histidine 101. The active-site Proton acceptor is lysine 147. At lysine 147 the chain carries N6-(pyridoxal phosphate)lysine. Residue glutamate 179 coordinates pyridoxal 5'-phosphate.

Belongs to the class-IV pyridoxal-phosphate-dependent aminotransferase family. Homodimer. It depends on pyridoxal 5'-phosphate as a cofactor.

It catalyses the reaction D-alanine + 2-oxoglutarate = D-glutamate + pyruvate. Acts on the D-isomers of alanine, leucine, aspartate, glutamate, aminobutyrate, norvaline and asparagine. The enzyme transfers an amino group from a substrate D-amino acid to the pyridoxal phosphate cofactor to form pyridoxamine and an alpha-keto acid in the first half-reaction. The second half-reaction is the reverse of the first, transferring the amino group from the pyridoxamine to a second alpha-keto acid to form the product D-amino acid via a ping-pong mechanism. This is an important process in the formation of D-alanine and D-glutamate, which are essential bacterial cell wall components. This chain is D-alanine aminotransferase (dat), found in Listeria monocytogenes serotype 4b (strain F2365).